Reading from the N-terminus, the 201-residue chain is Recombination protein RecR (201 aa).

Residues 57–72 (CSDCRTFTEQDVCAIC) form a C4-type zinc finger. Positions 81-176 (GLVCVVESPA…MASRIAHGVP (96 aa)) constitute a Toprim domain.

It belongs to the RecR family.

May play a role in DNA repair. It seems to be involved in an RecBC-independent recombinational process of DNA repair. It may act with RecF and RecO. In Pectobacterium atrosepticum (strain SCRI 1043 / ATCC BAA-672) (Erwinia carotovora subsp. atroseptica), this protein is Recombination protein RecR.